The primary structure comprises 124 residues: Small ribosomal subunit protein uS12 (124 aa).

A disordered region spans residues 1–25 (MATINQLVRKPRQATTYKSASPALD). At aspartate 89 the chain carries 3-methylthioaspartic acid.

Belongs to the universal ribosomal protein uS12 family. As to quaternary structure, part of the 30S ribosomal subunit. Contacts proteins S8 and S17. May interact with IF1 in the 30S initiation complex.

Functionally, with S4 and S5 plays an important role in translational accuracy. Interacts with and stabilizes bases of the 16S rRNA that are involved in tRNA selection in the A site and with the mRNA backbone. Located at the interface of the 30S and 50S subunits, it traverses the body of the 30S subunit contacting proteins on the other side and probably holding the rRNA structure together. The combined cluster of proteins S8, S12 and S17 appears to hold together the shoulder and platform of the 30S subunit. The chain is Small ribosomal subunit protein uS12 from Xanthomonas campestris pv. campestris (strain 8004).